Reading from the N-terminus, the 331-residue chain is DNA-directed RNA polymerase subunit alpha (331 aa).

Positions 1–232 (MQGTFRDFLK…DQLSVFVDLE (232 aa)) are alpha N-terminal domain (alpha-NTD). The tract at residues 247–331 (VDPILLRPID…AGLGEDRVVG (85 aa)) is alpha C-terminal domain (alpha-CTD).

Belongs to the RNA polymerase alpha chain family. Homodimer. The RNAP catalytic core consists of 2 alpha, 1 beta, 1 beta' and 1 omega subunit. When a sigma factor is associated with the core the holoenzyme is formed, which can initiate transcription.

It carries out the reaction RNA(n) + a ribonucleoside 5'-triphosphate = RNA(n+1) + diphosphate. Functionally, DNA-dependent RNA polymerase catalyzes the transcription of DNA into RNA using the four ribonucleoside triphosphates as substrates. This is DNA-directed RNA polymerase subunit alpha from Alkalilimnicola ehrlichii (strain ATCC BAA-1101 / DSM 17681 / MLHE-1).